The following is a 411-amino-acid chain: Tyrosine--tRNA ligase (411 aa).

L-tyrosine is bound at residue Tyr34. The short motif at 39–48 (CTATSLHIGS) is the 'HIGH' region element. L-tyrosine contacts are provided by Tyr171 and Gln175. The 'KMSKS' region motif lies at 231–235 (KMGKT). Lys234 is a binding site for ATP. The S4 RNA-binding domain occupies 345–411 (ISAYELFHEA…GKKRHILVRV (67 aa)).

The protein belongs to the class-I aminoacyl-tRNA synthetase family. TyrS type 1 subfamily. Homodimer.

It localises to the cytoplasm. The enzyme catalyses tRNA(Tyr) + L-tyrosine + ATP = L-tyrosyl-tRNA(Tyr) + AMP + diphosphate + H(+). Catalyzes the attachment of tyrosine to tRNA(Tyr) in a two-step reaction: tyrosine is first activated by ATP to form Tyr-AMP and then transferred to the acceptor end of tRNA(Tyr). This chain is Tyrosine--tRNA ligase, found in Rickettsia peacockii (strain Rustic).